Consider the following 410-residue polypeptide: F-box protein At3g61340 (410 aa).

An F-box domain is found at 17-66; sequence EEKSERIPFDLVIEILLRLPVKSIARFRYVSKLWQSTLRGQHFTESYLTI.

The chain is F-box protein At3g61340 from Arabidopsis thaliana (Mouse-ear cress).